Reading from the N-terminus, the 350-residue chain is Phosphoribosylformylglycinamidine cyclo-ligase (350 aa).

Belongs to the AIR synthase family.

Its subcellular location is the cytoplasm. The catalysed reaction is 2-formamido-N(1)-(5-O-phospho-beta-D-ribosyl)acetamidine + ATP = 5-amino-1-(5-phospho-beta-D-ribosyl)imidazole + ADP + phosphate + H(+). It functions in the pathway purine metabolism; IMP biosynthesis via de novo pathway; 5-amino-1-(5-phospho-D-ribosyl)imidazole from N(2)-formyl-N(1)-(5-phospho-D-ribosyl)glycinamide: step 2/2. The polypeptide is Phosphoribosylformylglycinamidine cyclo-ligase (Nitratidesulfovibrio vulgaris (strain DSM 19637 / Miyazaki F) (Desulfovibrio vulgaris)).